The chain runs to 457 residues: Hepatocyte nuclear factor 3-beta (457 aa).

The tract at residues 14–93 (DWSSYYAEPE…AGAMAGMGGS (80 aa)) is transactivation domain 1. The Nuclear localization signal motif lies at 106 to 113 (LSPSLSPL). Thr-156 bears the Phosphothreonine mark. Residues 159-252 (KPPYSYISLI…FENGCYLRRQ (94 aa)) constitute a DNA-binding region (fork-head). A phosphoserine mark is found at Ser-212 and Ser-283. A compositionally biased stretch (low complexity) spans 280–292 (AQASQAQLGEAAG). The tract at residues 280 to 365 (AQASQAQLGE…PGLPPEAHLK (86 aa)) is disordered. Over residues 298-310 (PAGTESPHSSASP) the composition is skewed to polar residues. Phosphothreonine is present on Thr-301. Ser-303, Ser-306, Ser-307, and Ser-309 each carry phosphoserine. Low complexity predominate over residues 339–352 (PGQQQQAAAHLLGP). The tract at residues 361 to 457 (EAHLKPEHHY…VYSRPIMNSS (97 aa)) is transactivation domain 2. Phosphoserine occurs at positions 436 and 457.

Binds DNA as a monomer. Binds TLE1. Interacts with FOXA1 and FOXA3. Interacts with PRKDC. Interacts with AKT1. Interacts with TET1; this interaction may recruit TET1 to specific genomic loci to mediate their demethylation. Post-translationally, phosphorylation on Thr-156 abolishes binding to target promoters and subsequent transcription activation upon insulin stimulation.

The protein localises to the nucleus. It localises to the cytoplasm. In terms of biological role, transcription factor that is involved in embryonic development, establishment of tissue-specific gene expression and regulation of gene expression in differentiated tissues. Is thought to act as a 'pioneer' factor opening the compacted chromatin for other proteins through interactions with nucleosomal core histones and thereby replacing linker histones at target enhancer and/or promoter sites. Binds DNA with the consensus sequence 5'-[AC]A[AT]T[AG]TT[GT][AG][CT]T[CT]-3'. In embryonic development is required for notochord formation. Involved in the development of multiple endoderm-derived organ systems such as the liver, pancreas and lungs; FOXA1 and FOXA2 seem to have at least in part redundant roles. Originally described as a transcription activator for a number of liver genes such as AFP, albumin, tyrosine aminotransferase, PEPCK, etc. Interacts with the cis-acting regulatory regions of these genes. Involved in glucose homeostasis; regulates the expression of genes important for glucose sensing in pancreatic beta-cells and glucose homeostasis. Involved in regulation of fat metabolism. Binds to fibrinogen beta promoter and is involved in IL6-induced fibrinogen beta transcriptional activation. The polypeptide is Hepatocyte nuclear factor 3-beta (FOXA2) (Homo sapiens (Human)).